The chain runs to 462 residues: Centrosomal protein of 55 kDa (462 aa).

Residues 1–11 (MSSRSPKDLIK) show a composition bias toward basic and acidic residues. Residues 1-26 (MSSRSPKDLIKSKWGSRPSSSKSDTA) are disordered. Low complexity predominate over residues 12–23 (SKWGSRPSSSKS). The stretch at 50-400 (KMAEKGRSRL…TQLESLKQLH (351 aa)) forms a coiled coil. Phosphoserine occurs at positions 96 and 99. The interaction with TSG101 stretch occupies residues 157–235 (ANCFNSSMNS…EGYLQVEKQK (79 aa)). Residues 160–214 (FNSSMNSIHEKEMQLKDALEKNQQWLVYDQQREAYVKGLLAKIFELEKRTETAAA) are interaction with PDCD6IP. Residues 354-462 (QMQACTLDFE…LLVHVEYCMK (109 aa)) are required for localization to the interphase centrosome and to the midbody during cytokinesis. The disordered stretch occupies residues 410–430 (PLQREPESRVKATSPKSPSAA). Phosphoserine is present on residues serine 423, serine 426, and serine 428. Serine 434 carries the phosphoserine; by PLK1 modification.

Homodimer. Interacts (phosphorylated on Ser-423 and Ser-426) with PLK1; the interaction is indirect via the MTMR3:MTMR4 heterooligomer, occurs during early mitosis, regulates the phosphorylation of CEP55 by PLK1 and its recruitment to the midbody where it can mediate cell abscission. Interacts with AKAP9/CG-NAP; the interaction occurs in interphase and is lost upon mitotic entry. Interacts with PCNT/Kendrin; the interaction occurs in interphase and is lost upon mitotic entry. Directly interacts with PDCD6IP; this interaction is required for PDCD6IP targeting to the midbody; CEP55 binds PDCD6IP in a 2:1 stoichiometry; PDCD6IP competes with TSG101 for the same binding site. Interacts with TSG101; TSG101 competes with PDCD6IP for the same binding site; interaction is required for cytokinesis. Interacts with MVB12A, VPS37B, VPS37C and VPS28. Post-translationally, there is a hierachy of phosphorylation, where both Ser-423 and Ser-426 are phosphorylated at the onset of mitosis, prior to Ser-434. Phosphorylation at Ser-423 and Ser-426 is required for dissociation from the centrosome at the G2/M boundary. Phosphorylation at the 3 sites, Ser-423, Ser-426 and Ser-434, is required for protein function at the final stages of cell division to complete cytokinesis successfully.

It is found in the cytoplasm. The protein resides in the cytoskeleton. It localises to the microtubule organizing center. Its subcellular location is the centrosome. The protein localises to the centriole. It is found in the cleavage furrow. The protein resides in the midbody. It localises to the midbody ring. In terms of biological role, plays a role in mitotic exit and cytokinesis. Recruits PDCD6IP and TSG101 to midbody during cytokinesis. Required for successful completion of cytokinesis. Not required for microtubule nucleation. Plays a role in the development of the brain and kidney. In Mus musculus (Mouse), this protein is Centrosomal protein of 55 kDa.